The chain runs to 103 residues: uncharacterized protein (103 aa).

Residues 1-10 (MVVKKSKPKN) are compositionally biased toward basic residues. Disordered regions lie at residues 1 to 38 (MVVKKSKPKNQIRVEDLDLPKLNTSKNPQTKIQKKGKK) and 77 to 103 (AVFSKQSDRKISNNKADKKTGRKNEKK).

This is an uncharacterized protein from Schizosaccharomyces pombe (strain 972 / ATCC 24843) (Fission yeast).